A 133-amino-acid polypeptide reads, in one-letter code: Phosphoribosyl-AMP cyclohydrolase (133 aa).

Mg(2+) is bound at residue D82. C83 lines the Zn(2+) pocket. D84 and D86 together coordinate Mg(2+). Residues C99 and C106 each coordinate Zn(2+).

Belongs to the PRA-CH family. As to quaternary structure, homodimer. Mg(2+) is required as a cofactor. It depends on Zn(2+) as a cofactor.

It localises to the cytoplasm. The enzyme catalyses 1-(5-phospho-beta-D-ribosyl)-5'-AMP + H2O = 1-(5-phospho-beta-D-ribosyl)-5-[(5-phospho-beta-D-ribosylamino)methylideneamino]imidazole-4-carboxamide. Its pathway is amino-acid biosynthesis; L-histidine biosynthesis; L-histidine from 5-phospho-alpha-D-ribose 1-diphosphate: step 3/9. Its function is as follows. Catalyzes the hydrolysis of the adenine ring of phosphoribosyl-AMP. This is Phosphoribosyl-AMP cyclohydrolase from Rhodospirillum centenum (strain ATCC 51521 / SW).